The chain runs to 406 residues: Tyrosine-specific transport system 2 (406 aa).

Helical transmembrane passes span 7-27 (FGSA…AMPL), 38-58 (LLLL…FVEV), 83-103 (IFAT…YITG), 119-139 (AMSL…FVVV), 150-170 (VLFI…LPKV), 183-203 (AFVV…VIMA), 219-239 (AILI…LATH), 279-299 (VFSS…VFEG), 314-334 (FVLT…YPEG), 335-355 (FITA…ILPI), and 376-396 (NFAL…PFLI).

This sequence belongs to the amino acid/polyamine transporter 2 family. Mtr/TnaB/TyrP permease subfamily.

The protein resides in the cell inner membrane. It catalyses the reaction L-tyrosine(in) + H(+)(in) = L-tyrosine(out) + H(+)(out). Functionally, transports tyrosine across the cytoplasmic membrane. The transport system is energized by the proton motive force. The polypeptide is Tyrosine-specific transport system 2 (tyrP-B) (Haemophilus influenzae (strain ATCC 51907 / DSM 11121 / KW20 / Rd)).